The chain runs to 1328 residues: Retrovirus-related Pol polyprotein from transposon TNT 1-94 (1328 aa).

The interval 189-265 (PENQGQALIT…SGQKNDDNTA (77 aa)) is disordered. Over residues 217 to 229 (ARGKSKNRSKSRV) the composition is skewed to basic residues. The segment at 230–247 (RNCYNCNQPGHFKRDCPN) adopts a CCHC-type zinc-finger fold. Over residues 241 to 253 (FKRDCPNPRKGKG) the composition is skewed to basic and acidic residues. D297 (for protease activity) is an active-site residue. An Integrase catalytic domain is found at 473-642 (SSERKLNILD…IPERVWTNKE (170 aa)). Residues 729-742 (TIPSTSNNPTSAES) show a composition bias toward polar residues. The tract at residues 729–800 (TIPSTSNNPT…RVESRRYPST (72 aa)) is disordered. The span at 770–798 (EVEHPTQGEEQHQPLRRSERPRVESRRYP) shows a compositional bias: basic and acidic residues.

The enzyme catalyses DNA(n) + a 2'-deoxyribonucleoside 5'-triphosphate = DNA(n+1) + diphosphate. This chain is Retrovirus-related Pol polyprotein from transposon TNT 1-94, found in Nicotiana tabacum (Common tobacco).